The following is a 123-amino-acid chain: Holo-[acyl-carrier-protein] synthase (123 aa).

2 residues coordinate Mg(2+): Asp-8 and Glu-56.

The protein belongs to the P-Pant transferase superfamily. AcpS family. It depends on Mg(2+) as a cofactor.

It localises to the cytoplasm. The catalysed reaction is apo-[ACP] + CoA = holo-[ACP] + adenosine 3',5'-bisphosphate + H(+). Its function is as follows. Transfers the 4'-phosphopantetheine moiety from coenzyme A to a Ser of acyl-carrier-protein. The sequence is that of Holo-[acyl-carrier-protein] synthase from Clostridium beijerinckii (strain ATCC 51743 / NCIMB 8052) (Clostridium acetobutylicum).